Here is a 280-residue protein sequence, read N- to C-terminus: 4-diphosphocytidyl-2-C-methyl-D-erythritol kinase (280 aa).

The active site involves Lys-8. 91–101 (PVAAGLAGGST) is a binding site for ATP. The active site involves Asp-133.

Belongs to the GHMP kinase family. IspE subfamily.

It carries out the reaction 4-CDP-2-C-methyl-D-erythritol + ATP = 4-CDP-2-C-methyl-D-erythritol 2-phosphate + ADP + H(+). The protein operates within isoprenoid biosynthesis; isopentenyl diphosphate biosynthesis via DXP pathway; isopentenyl diphosphate from 1-deoxy-D-xylulose 5-phosphate: step 3/6. In terms of biological role, catalyzes the phosphorylation of the position 2 hydroxy group of 4-diphosphocytidyl-2C-methyl-D-erythritol. In Clostridium botulinum (strain Okra / Type B1), this protein is 4-diphosphocytidyl-2-C-methyl-D-erythritol kinase.